The chain runs to 289 residues: MATADPFDSALDLLRRLNPKHTAEHLNNLITLAPDLTEDLLSSVDQPLTVKRCKQTGRDYLLCDYNRDGDSYRSPWSNQFDPPLEGGNQGGSGGDGEGDGGEGGAAGSIMPGERVRKMEIKANEAFDVYRELYYEGGVSSVYFWNLDDGFAGVVLLKKSSPTNPSSSGVWDSIHVFEASERGRTSNYRLTSTVILSLATKGNALGEVDLSGNMTRQVEQDLPVENDESHIANIGRLVEDMELKMRNLLQEVYFGKAKDVVGDLRSVGSLSEGQRDRDAQMEIIGSMRKA.

A disordered region spans residues 73 to 110 (RSPWSNQFDPPLEGGNQGGSGGDGEGDGGEGGAAGSIM). Gly residues predominate over residues 87–106 (GNQGGSGGDGEGDGGEGGAA).

This sequence belongs to the F-actin-capping protein beta subunit family. As to quaternary structure, component of the F-actin capping complex, composed of a heterodimer of an alpha and a beta subunit.

The protein localises to the cytoplasm. It is found in the cytoskeleton. The protein resides in the actin patch. F-actin-capping proteins bind in a Ca(2+)-independent manner to the fast growing ends of actin filaments (barbed end) thereby blocking the exchange of subunits at these ends. Unlike other capping proteins (such as gelsolin and severin), these proteins do not sever actin filaments. In Neurospora crassa (strain ATCC 24698 / 74-OR23-1A / CBS 708.71 / DSM 1257 / FGSC 987), this protein is F-actin-capping protein subunit beta (fac-2).